The chain runs to 21 residues: Kassinatuerin-1 (21 aa).

At Ile21 the chain carries Isoleucine amide.

As to expression, expressed by the skin dorsal glands.

It localises to the secreted. In terms of biological role, shows broad-spectrum antimicrobial activity against the Gram-negative bacterium E.coli (MIC=6.25 uM), K.pneumoniae (MIC=25 uM), E.cloacae (MIC=6.25 uM), P.aeruginosa (MIC=25 uM), the Gram-positive bacterium S.aureus (MIC=6.25 uM), S.epidermidis (MIC=6.25 uM), E.faecalis (MIC=12.5 uM), and the fungus C.albicans (MIC=100 uM). Has no antimicrobial effect against P.mirabilis (MIC&gt;100 uM). Has relatively high cytolytic and hemolytic activities. Its alpha-helix has considerable amphipathic character. In Kassina senegalensis (Senegal running frog), this protein is Kassinatuerin-1.